We begin with the raw amino-acid sequence, 228 residues long: Phosphatidylserine decarboxylase proenzyme (228 aa).

Serine 197 functions as the Schiff-base intermediate with substrate; via pyruvic acid in the catalytic mechanism. A Pyruvic acid (Ser); by autocatalysis modification is found at serine 197.

Belongs to the phosphatidylserine decarboxylase family. PSD-A subfamily. Heterodimer of a large membrane-associated beta subunit and a small pyruvoyl-containing alpha subunit. Requires pyruvate as cofactor. Is synthesized initially as an inactive proenzyme. Formation of the active enzyme involves a self-maturation process in which the active site pyruvoyl group is generated from an internal serine residue via an autocatalytic post-translational modification. Two non-identical subunits are generated from the proenzyme in this reaction, and the pyruvate is formed at the N-terminus of the alpha chain, which is derived from the carboxyl end of the proenzyme. The post-translation cleavage follows an unusual pathway, termed non-hydrolytic serinolysis, in which the side chain hydroxyl group of the serine supplies its oxygen atom to form the C-terminus of the beta chain, while the remainder of the serine residue undergoes an oxidative deamination to produce ammonia and the pyruvoyl prosthetic group on the alpha chain.

It is found in the cell membrane. It catalyses the reaction a 1,2-diacyl-sn-glycero-3-phospho-L-serine + H(+) = a 1,2-diacyl-sn-glycero-3-phosphoethanolamine + CO2. Its pathway is phospholipid metabolism; phosphatidylethanolamine biosynthesis; phosphatidylethanolamine from CDP-diacylglycerol: step 2/2. Functionally, catalyzes the formation of phosphatidylethanolamine (PtdEtn) from phosphatidylserine (PtdSer). In Bacteroides fragilis (strain ATCC 25285 / DSM 2151 / CCUG 4856 / JCM 11019 / LMG 10263 / NCTC 9343 / Onslow / VPI 2553 / EN-2), this protein is Phosphatidylserine decarboxylase proenzyme.